The following is a 142-amino-acid chain: Transcriptional regulator MraZ (142 aa).

2 SpoVT-AbrB domains span residues 5–51 and 77–120; these read ASAL…PRPE and AADV…DAAT.

Belongs to the MraZ family. In terms of assembly, forms oligomers.

It localises to the cytoplasm. The protein localises to the nucleoid. The sequence is that of Transcriptional regulator MraZ from Ralstonia pickettii (strain 12J).